Here is a 502-residue protein sequence, read N- to C-terminus: Galactose/methyl galactoside import ATP-binding protein MglA (502 aa).

ABC transporter domains follow at residues 10-245 (LEMT…VGRE) and 255-502 (NTPK…SRYL). Residue 42-49 (GENGAGKS) participates in ATP binding.

It belongs to the ABC transporter superfamily. Galactose/methyl galactoside importer (TC 3.A.1.2.3) family. The complex is composed of one ATP-binding protein (MglA), two transmembrane proteins (MglC) and a solute-binding protein (MglB).

It localises to the cell inner membrane. It catalyses the reaction D-galactose(out) + ATP + H2O = D-galactose(in) + ADP + phosphate + H(+). The catalysed reaction is methyl beta-D-galactoside(out) + ATP + H2O = methyl beta-D-galactoside(in) + ADP + phosphate + H(+). Part of the ABC transporter complex MglABC involved in galactose/methyl galactoside import. Responsible for energy coupling to the transport system. The protein is Galactose/methyl galactoside import ATP-binding protein MglA of Vibrio vulnificus (strain CMCP6).